A 304-amino-acid chain; its full sequence is Ferredoxin fas2 (304 aa).

The 28-residue stretch at 2-29 (KVVVNERRCFGSGQCVLVAPEVFEQSND) folds into the 4Fe-4S ferredoxin-type domain. [3Fe-4S] cluster is bound by residues cysteine 10, cysteine 16, and cysteine 54. The transketolase-like stretch occupies residues 66–304 (MRQEPTEFSY…QSARSSIQQR (239 aa)).

In the C-terminal section; belongs to the transketolase family. It depends on [3Fe-4S] cluster as a cofactor.

Its function is as follows. Plays a role in electron transfer. The fas operon encodes genes involved in cytokinin production and in host plant fasciation (leafy gall). This is Ferredoxin fas2 (fas2) from Rhodococcoides fascians (Rhodococcus fascians).